We begin with the raw amino-acid sequence, 262 residues long: Oxidoreductase AgnL4 (262 aa).

Belongs to the avfA family.

It functions in the pathway secondary metabolite biosynthesis. Functionally, oxidoreductase; part of the gene cluster that mediates the biosynthesis of agnestins, dihydroxy-xanthone metabolites. The pathway begins with the assembly and cyclization of atrochrysone thioester by the non-reducing polyketide synthase Agnpks1. The atrochrysone carboxyl ACP thioesterase AgnL7 then breaks the thioester bond and releases the atrochrysone carboxylic acid as the first enzyme-free intermediate. The decarboxylase AgnL1 then catalyzes the concerted decarboxylation-elimination required to convert atochrysone carboxylic acid into emodin anthrone, which is further oxidized to emodin by the anthrone oxygenase AgnL2. Emodin then undergoes reduction catalyzed by the oxidoreductase AgnL4 to yield the dihydroquinone tautomer which is the substrate for reduction by the short chain dehydrogenase AgnL6 reduction to produce hydroxyketone, followed by AgnL8 dehydration and likely spontaneous autoxidation to chrysophanol. Baeyer-Villiger oxidation by the oxidase AgnL3 leads to monodictyphenone via cleavage of the C-10/C-10a bond of chrysophanol. Alternative cleavage at the C-4a/C-10 bond of chrysophanol also leads to the formation some cephalone F. Further conversion to agnestins A and B, requires reduction to dihydro-monodictyphenone, oxidation to agnestin C probably via an epoxide, and rearrangement to either agnestin A or agnestin B directly, although agnestin A or agnestin B can also interconvert. Within the cluster, AgnR1 is the only unassigned oxidoreductase present which could be involved in this conversion. However, AgnR1 seems not to be involved in this step, and thus genes involved in the proposed oxidation/reduction may be located elsewhere on the genome. Further agnestin A derivatives are probably formed by spontaneous decarboxylations, dehydrations and methanolysis reactions. This Paecilomyces divaricatus (Penicillium divaricatum) protein is Oxidoreductase AgnL4.